A 231-amino-acid chain; its full sequence is UPF0702 transmembrane protein YetF (231 aa).

Transmembrane regions (helical) follow at residues 5–25, 33–53, and 59–79; these read LSVA…LKLL, ITPF…NAVY, and IKEI…IEFI.

The protein belongs to the UPF0702 family.

The protein resides in the cell membrane. This Bacillus subtilis (strain 168) protein is UPF0702 transmembrane protein YetF (yetF).